The chain runs to 468 residues: UDP-N-acetylmuramate--L-alanine ligase (468 aa).

114 to 120 (GTHGKTT) is a binding site for ATP.

This sequence belongs to the MurCDEF family.

Its subcellular location is the cytoplasm. It catalyses the reaction UDP-N-acetyl-alpha-D-muramate + L-alanine + ATP = UDP-N-acetyl-alpha-D-muramoyl-L-alanine + ADP + phosphate + H(+). It participates in cell wall biogenesis; peptidoglycan biosynthesis. In terms of biological role, cell wall formation. The sequence is that of UDP-N-acetylmuramate--L-alanine ligase from Methylocella silvestris (strain DSM 15510 / CIP 108128 / LMG 27833 / NCIMB 13906 / BL2).